A 307-amino-acid polypeptide reads, in one-letter code: MGVTIEKLIKDFSLEVIQIGEENVPINVSDVNRPGLQLAGFYNYFAPERIQVIGKAEWSFLEDMSPDLRKKRLNKFFSFDISCLIITRGLEIHEELLKAARKRNLWILRSDMVTTKFISKITMYLSDKMAPETRLHGVLVDVYGIGMLITGESGIGKSETALELIKRGHRLVTDDAVDIKEIDGDLIGRSPEITFGMLEVRGMGIIDVSALYGLSSILNSKQIKIIIHFEHWKDDGDYDRLGVNDEYQDILGVKVKKLRVPIRPGRNIAVIIEAAAANYRYQRMSDISPVDIIEKRMLESMEKESKI.

Residues H136 and K157 contribute to the active site. 151-158 (GESGIGKS) is an ATP binding site. S158 serves as a coordination point for Mg(2+). Residue D175 is the Proton acceptor; for phosphorylation activity. Proton donor; for dephosphorylation activity of the active site. An important for the catalytic mechanism of both phosphorylation and dephosphorylation region spans residues 198 to 207 (LEVRGMGIID). E199 is a Mg(2+) binding site. Residue R240 is part of the active site. Residues 261–266 (PIRPGR) are important for the catalytic mechanism of dephosphorylation.

The protein belongs to the HPrK/P family. As to quaternary structure, homohexamer. Requires Mg(2+) as cofactor.

It carries out the reaction [HPr protein]-L-serine + ATP = [HPr protein]-O-phospho-L-serine + ADP + H(+). It catalyses the reaction [HPr protein]-O-phospho-L-serine + phosphate + H(+) = [HPr protein]-L-serine + diphosphate. Functionally, catalyzes the ATP- as well as the pyrophosphate-dependent phosphorylation of a specific serine residue in HPr, a phosphocarrier protein of the phosphoenolpyruvate-dependent sugar phosphotransferase system (PTS). HprK/P also catalyzes the pyrophosphate-producing, inorganic phosphate-dependent dephosphorylation (phosphorolysis) of seryl-phosphorylated HPr (P-Ser-HPr). The two antagonistic activities of HprK/P are regulated by several intracellular metabolites, which change their concentration in response to the absence or presence of rapidly metabolisable carbon sources (glucose, fructose, etc.) in the growth medium. Therefore, by controlling the phosphorylation state of HPr, HPrK/P is a sensor enzyme that plays a major role in the regulation of carbon metabolism and sugar transport: it mediates carbon catabolite repression (CCR), and regulates PTS-catalyzed carbohydrate uptake and inducer exclusion. This Clostridium perfringens (strain 13 / Type A) protein is HPr kinase/phosphorylase.